Reading from the N-terminus, the 140-residue chain is Ig heavy chain V region 93G7 (140 aa).

An N-terminal signal peptide occupies residues 1-19 (MGWSFIFLFLLSVTAGVHS). Residues 20–139 (EVQLQQSGAE…WGQGTPLTVS (120 aa)) enclose the Ig-like domain.

This is Ig heavy chain V region 93G7 from Mus musculus (Mouse).